Consider the following 1032-residue polypeptide: MGPCRGALHPLSLLVQAAALALALAQGTLPAFLPCELQPHGLVNCNWLFLKSVPRFSAAAPRGNVTSLSLYSNRIHHLHDYDFVHFVHLRRLNLKWNCPPASLSPMHFPCHMTIEPNTFLAVPTLEDLNLSYNSITTVPALPSSLVSLSLSRTNILVLDPATLAGLYALRFLFLDGNCYYKNPCQQALQVAPGALLGLGNLTHLSLKYNNLTVVPRGLPPSLEYLLLSYNHIITLAPEDLANLTALRVLDVGGNCRRCDHARNPCRECPKGFPQLHPNTFGHLSHLEGLVLRDSSLYSLDPRWFHGLGNLMVLDLSENFLYDCITKTKAFYGLARLRRLNLSFNYHKKVSFAHLHLASSFGSLLSLQELDIHGIFFRSLSKTTLQSLAHLPMLQRLHLQLNFISQAQLSIFGAFPGLRYVDLSDNRISGAAEPAAATGEVEADCGERVWPQSRDLALGPLGTPGSEAFMPSCRTLNFTLDLSRNNLVTVQPEMFVRLARLQCLGLSHNSISQAVNGSQFVPLSNLRVLDLSHNKLDLYHGRSFTELPRLEALDLSYNSQPFSMRGVGHNLSFVAQLPALRYLSLAHNGIHSRVSQQLRSASLRALDFSGNTLSQMWAEGDLYLRFFQGLRSLVQLDLSQNRLHTLLPRNLDNLPKSLRLLRLRDNYLAFFNWSSLALLPKLEALDLAGNQLKALSNGSLPNGTQLQRLDLSGNSIGFVVPSFFALAVRLRELNLSANALKTVEPSWFGSLAGALKVLDVTANPLHCACGATFVDFLLEVQAAVPGLPSRVKCGSPGQLQGRSIFAQDLRLCLDEALSWVCFSLSLLAVALSLAVPMLHQLCGWDLWYCFHLCLAWLPRRGRRRGVDALAYDAFVVFDKAQSSVADWVYNELRVQLEERRGRRALRLCLEERDWVPGKTLFENLWASVYSSRKTLFVLARTDRVSGLLRASFLLAQQRLLEDRKDVVVLVILCPDAHRSRYVRLRQRLCRQSVLLWPHQPSGQRSFWAQLGTALTRDNRHFYNQNFCRGPTTA.

The signal sequence occupies residues Met-1–Ala-25. Residues Gln-26–Ala-815 lie on the Extracellular side of the membrane. Cysteines 35 and 45 form a disulfide. Trp-47 to Lys-51 contacts DNA. LRR repeat units lie at residues Arg-62 to His-85, Val-87 to Cys-110, Val-122 to Ser-147, Leu-150 to Leu-166, Tyr-167 to Val-190, Leu-198 to Ser-221, Glu-223 to Asn-242, Leu-243 to Cys-268, Leu-283 to Gly-306, Gly-308 to Gly-332, Leu-333 to Leu-356, Leu-363 to Ser-386, Leu-390 to Ala-413, Pro-415 to Val-440, Cys-472 to Arg-496, Ala-498 to Pro-521, Leu-522 to Glu-545, Pro-547 to Ala-574, Leu-576 to Ala-600, Leu-602 to Arg-624, Leu-629 to Asn-652, Pro-654 to Leu-677, Leu-678 to Asn-701, Thr-703 to Leu-725, Ala-726 to Ser-749, and Ala-751 to Asp-774. An N-linked (GlcNAc...) asparagine glycan is attached at Asn-64. DNA is bound by residues Ser-72 to His-77 and Lys-95 to Pro-109. Cys-98 and Cys-110 are oxidised to a cystine. N-linked (GlcNAc...) asparagine glycosylation is present at Asn-129. DNA contacts are provided by residues Tyr-132, Arg-152, and Tyr-179 to Lys-181. Cys-178 and Cys-184 are disulfide-bonded. An N-linked (GlcNAc...) asparagine glycan is attached at Asn-200. A DNA-binding site is contributed by Tyr-208. N-linked (GlcNAc...) asparagine glycans are attached at residues Asn-210 and Asn-242. Cystine bridges form between Cys-255–Cys-268 and Cys-258–Cys-265. Cys-258 carries S-palmitoyl cysteine lipidation. DNA is bound at residue Arg-262. The S-palmitoyl cysteine moiety is linked to residue Cys-265. Asn-340 carries an N-linked (GlcNAc...) asparagine glycan. A disulfide bridge connects residues Cys-472 and Cys-502. Asn-476 and Asn-515 each carry an N-linked (GlcNAc...) asparagine glycan. An N-linked (GlcNAc...) asparagine glycan is attached at Asn-569. Asn-671, Asn-696, and Asn-701 each carry an N-linked (GlcNAc...) asparagine glycan. A glycan (N-linked (GlcNAc...) asparagine) is linked at Asn-733. Cystine bridges form between Cys-766-Cys-792 and Cys-768-Cys-811. A helical membrane pass occupies residues Leu-816–Met-836. The Cytoplasmic portion of the chain corresponds to Leu-837 to Ala-1032. Residues Leu-868–Leu-1013 enclose the TIR domain.

This sequence belongs to the Toll-like receptor family. As to quaternary structure, monomer and homodimer. Exists as a monomer in the absence of unmethylated cytidine-phosphate-guanosine (CpG) ligand. Proteolytic processing of an insertion loop (Z-loop) is required for homodimerization upon binding to the unmethylated CpG ligand leading to its activation. Interacts with MYD88 via their respective TIR domains. Interacts with BTK. Interacts (via transmembrane domain) with UNC93B1. Interacts with CD300LH; the interaction may promote full activation of TLR9-triggered innate responses. Interacts with CNPY3 and HSP90B1; this interaction is required for proper folding in the endoplasmic reticulum. Interacts with SMPDL3B. Interacts with CD82; this interaction is essential for TLR9-dependent myddosome formation in response to CpG stimulation. Activated by proteolytic cleavage of the flexible loop between repeats LRR14 and LRR15 within the ectodomain. Cleavage requires UNC93B1. Proteolytically processed by first removing the majority of the ectodomain by either asparagine endopeptidase (AEP) or a cathepsin followed by a trimming event that is solely cathepsin mediated and required for optimal receptor signaling. In terms of processing, palmitoylated by ZDHHC3 in the Golgi regulates TLR9 trafficking from the Golgi to endosomes. Depalmitoylation by PPT1 controls the release of TLR9 from UNC93B1 in endosomes.

It localises to the endoplasmic reticulum membrane. Its subcellular location is the endosome. The protein resides in the lysosome. It is found in the cytoplasmic vesicle. The protein localises to the phagosome. Functionally, key component of innate and adaptive immunity. TLRs (Toll-like receptors) control host immune response against pathogens through recognition of molecular patterns specific to microorganisms. TLR9 is a nucleotide-sensing TLR which is activated by unmethylated cytidine-phosphate-guanosine (CpG) dinucleotides. Acts via MYD88 and TRAF6, leading to NF-kappa-B activation, cytokine secretion and the inflammatory response. Upon CpG stimulation, induces B-cell proliferation, activation, survival and antibody production. This Canis lupus familiaris (Dog) protein is Toll-like receptor 9 (TLR9).